A 391-amino-acid chain; its full sequence is Na(+)/H(+) antiporter NhaA (391 aa).

11 consecutive transmembrane segments (helical) span residues 14–34, 59–79, 95–115, 124–144, 154–174, 177–197, 213–233, 261–281, 287–307, 328–348, and 363–383; these read AGGI…NSPL, LLLW…GLEV, SLPT…YLFF, VGWA…MALL, VFLL…IALF, TDLS…LVAL, IILW…GVVI, FLIL…NVGF, PVPV…VLLF, IAPV…IASL, and IGIL…LSKV.

Belongs to the NhaA Na(+)/H(+) (TC 2.A.33) antiporter family.

The protein localises to the cell inner membrane. It carries out the reaction Na(+)(in) + 2 H(+)(out) = Na(+)(out) + 2 H(+)(in). In terms of biological role, na(+)/H(+) antiporter that extrudes sodium in exchange for external protons. The chain is Na(+)/H(+) antiporter NhaA from Shewanella amazonensis (strain ATCC BAA-1098 / SB2B).